The chain runs to 407 residues: Lysosome-associated membrane glycoprotein 1 (407 aa).

Residues 1–21 (MAAPGARRPLLLLLLAGLAHS) form the signal peptide. Residues 22 to 189 (APALFEVKDN…SKEETRCPQD (168 aa)) form a first lumenal domain region. Topologically, residues 22–371 (APALFEVKDN…VEECVQDGNN (350 aa)) are lumenal. Asn32, Asn59, Asn71, Asn79, Asn102, Asn116, Asn125, Asn145, Asn160, and Asn178 each carry an N-linked (GlcNAc...) asparagine glycan. Cys36 and Cys75 are oxidised to a cystine. A disulfide bridge links Cys150 with Cys186. The disordered stretch occupies residues 180-211 (SKEETRCPQDQPSPTTGPPSPSPPLVPTNPSV). The segment at 190-219 (QPSPTTGPPSPSPPLVPTNPSVSKYNVTGD) is hinge. Residues 194-206 (TTGPPSPSPPLVP) are compositionally biased toward pro residues. 8 N-linked (GlcNAc...) asparagine glycosylation sites follow: Asn215, Asn220, Asn233, Asn241, Asn271, Asn283, Asn297, and Asn312. The interval 220–371 (NGTCLLASMA…VEECVQDGNN (152 aa)) is second lumenal domain. Cysteines 223 and 260 form a disulfide. Cys328 and Cys365 are disulfide-bonded. The chain crosses the membrane as a helical span at residues 372–395 (MLIPIAVGGALAGLVLIVLIAYLI). At 396–407 (GRKRSHAGYQTI) the chain is on the cytoplasmic side.

The protein belongs to the LAMP family. Interacts with ABCB9; this interaction strongly stabilizes ABCB9 and protects ABCB9 against lysosomal degradation. Interacts with FURIN. Interacts with TMEM175; inhibiting the proton channel activity of TMEM175. In terms of processing, O- and N-glycosylated; some of the N-glycans attached to LAMP-1 are polylactosaminoglycans.

The protein localises to the lysosome membrane. It localises to the endosome membrane. Its subcellular location is the late endosome membrane. It is found in the cell membrane. The protein resides in the cytolytic granule membrane. Lysosomal membrane glycoprotein which plays an important role in lysosome biogenesis, lysosomal pH regulation, autophagy and cholesterol homeostasis. Acts as an important regulator of lysosomal lumen pH regulation by acting as a direct inhibitor of the proton channel TMEM175, facilitating lysosomal acidification for optimal hydrolase activity. Also plays an important role in NK-cells cytotoxicity. Mechanistically, participates in cytotoxic granule movement to the cell surface and perforin trafficking to the lytic granule. In addition, protects NK-cells from degranulation-associated damage induced by their own cytotoxic granule content. Presents carbohydrate ligands to selectins. The protein is Lysosome-associated membrane glycoprotein 1 (Lamp1) of Rattus norvegicus (Rat).